Here is a 506-residue protein sequence, read N- to C-terminus: MSEQQPQAPDAALELNNELKARREKLVALRATGLAFPNDFRRDRTSDQLHAEFDGKENEELEALGIEVSVAGRMMTRRIMGKASFVTLQDVGGRIQLYVSRDDLAEGIYNEQFKKWDLGDILGARGKLFKTKTGELSIHCSELRLLTKALRPLPDKFHGLADQETRYRQRYLDLIANDDSRNTFKIRSQIMAGIRSFMVDRDFMEVETPMMQAIPGGASARPFITHHNALDLDMYLRIAPELYLKRLVVGGFDRVFEINRNFRNEGISPRHNPEFTMMELYMAYADYKDLIELTESLFRTLAQDVLGSTVVPYGDQQFDFGKPFEKLTMKEAILKYRPQTDLADLADFDKSVAIAQSLGIKVEKSWGLGRLVTEIFEETAEAHLIQPTFITEYPAEVSPLARRNDMDPEITDRFEFFIGGREIGNGFSELNDAQDQAERFLQQVNAKDAGDDEAMFYDEDYVTALEHGLPPTAGLGIGIDRMVMLFTNSHTIRDVILFPALRPGSK.

Residues E415 and E422 each contribute to the Mg(2+) site.

Belongs to the class-II aminoacyl-tRNA synthetase family. Homodimer. Requires Mg(2+) as cofactor.

Its subcellular location is the cytoplasm. The enzyme catalyses tRNA(Lys) + L-lysine + ATP = L-lysyl-tRNA(Lys) + AMP + diphosphate. The polypeptide is Lysine--tRNA ligase (Erwinia tasmaniensis (strain DSM 17950 / CFBP 7177 / CIP 109463 / NCPPB 4357 / Et1/99)).